Consider the following 251-residue polypeptide: Imidazole glycerol phosphate synthase subunit HisF (251 aa).

Catalysis depends on residues D12 and D131.

The protein belongs to the HisA/HisF family. Heterodimer of HisH and HisF.

The protein localises to the cytoplasm. It carries out the reaction 5-[(5-phospho-1-deoxy-D-ribulos-1-ylimino)methylamino]-1-(5-phospho-beta-D-ribosyl)imidazole-4-carboxamide + L-glutamine = D-erythro-1-(imidazol-4-yl)glycerol 3-phosphate + 5-amino-1-(5-phospho-beta-D-ribosyl)imidazole-4-carboxamide + L-glutamate + H(+). It functions in the pathway amino-acid biosynthesis; L-histidine biosynthesis; L-histidine from 5-phospho-alpha-D-ribose 1-diphosphate: step 5/9. In terms of biological role, IGPS catalyzes the conversion of PRFAR and glutamine to IGP, AICAR and glutamate. The HisF subunit catalyzes the cyclization activity that produces IGP and AICAR from PRFAR using the ammonia provided by the HisH subunit. This Helicobacter hepaticus (strain ATCC 51449 / 3B1) protein is Imidazole glycerol phosphate synthase subunit HisF.